We begin with the raw amino-acid sequence, 509 residues long: MDEDKDIDSKESGEYEDDFEKDLEWLINDKEKSNGSTIEMACKKEDDLDQVLKENETETELGQQLSDPDNSPKDEALPRRNDFISVPSIQPLDPISDSDSENSFQDSKPENQKDLEDEEDEEVRRYIMEKIIEANKLLQTQEPVNDKRERKLKFKDKLVDLEVPPLEDSDTCKALLENETNMSGKLSQLCISGDLEQESVLVSVTDGSCEENDRKILVERDGKFELMNLQDIESQGFLPPISSANSVEHESSQLPLRAPNPSVGGIKKEESEAKGHVLPISPAGEPLAQVPQLLPNPKNRPSSAANPDVTKKARRSNHRIQSAGVSPVTSTYCLSPRQKELQKQLERKREKLKREEEQRKLEEENEKKKENEMVFKAWLQKKREQVIEMRRVQRAKQIEDMSSRQVNRDPQQAFRLWLKKKHEEQMKERKTEELRKQEECLFFLRGTEGRERAFRQWLRRKQIEKIAEQQAVKERARQLRLEARRSKQLQSSLYSIPEAKAFRFTDHYN.

Disordered regions lie at residues 1–122 and 237–369; these read MDED…EDEE and FLPP…EKKK. Composition is skewed to basic and acidic residues over residues 22–33 and 41–56; these read DLEWLINDKEKS and ACKK…KENE. A compositionally biased stretch (polar residues) spans 60–69; that stretch reads ELGQQLSDPD. Basic and acidic residues-rich tracts occupy residues 70-82 and 266-275; these read NSPK…RRND and IKKEESEAKG. Over residues 319–333 the composition is skewed to polar residues; sequence RIQSAGVSPVTSTYC. Coiled coils occupy residues 335-377 and 418-488; these read SPRQ…VFKA and LKKK…RSKQ. The segment covering 337–369 has biased composition (basic and acidic residues); it reads RQKELQKQLERKREKLKREEEQRKLEEENEKKK.

This sequence belongs to the CCDC181 family. Homodimer. Interacts with HOOK1. Interacts with HOOK2. Interacts with HOOK3. Predominantly expressed in testis. Expressed at lower level in brain, eye, trachea and lung. Barely expressed in tongue, heart, liver, kidney, spleen and muscle. Present at high level in elongating spermatids, whereas lower levels are observed in round spermatids (at protein level).

The protein resides in the cytoplasm. Its subcellular location is the cytoskeleton. It is found in the cell projection. It localises to the cilium. The protein localises to the flagellum. Microtubule-binding protein that localizes to the microtubular manchette of elongating spermatids. The protein is Coiled-coil domain-containing protein 181 of Mus musculus (Mouse).